Consider the following 589-residue polypeptide: Muscarinic acetylcholine receptor M3 (589 aa).

Over 1–66 (MTLHSNSTTS…DPLGGHTIWQ (66 aa)) the chain is Extracellular. 5 N-linked (GlcNAc...) asparagine glycosylation sites follow: Asn-6, Asn-15, Asn-41, Asn-48, and Asn-52. Residues 67-90 (VVFIAFLTGFLALVTIIGNILVIV) traverse the membrane as a helical segment. Residues 91 to 103 (AFKVNKQLKTVNN) are Cytoplasmic-facing. Residues 104 to 129 (YFLLSLACADLIIGVISMNLFTTYII) form a helical membrane-spanning segment. The Extracellular portion of the chain corresponds to 130–141 (MNRWALGNLACD). An intrachain disulfide couples Cys-140 to Cys-220. Residues 142-163 (LWLSIDYVASNASVMNLLVISF) form a helical membrane-spanning segment. At 164–183 (DRYFSITRPLTYRAKRTTKR) the chain is on the cytoplasmic side. A helical transmembrane segment spans residues 184–205 (AGVMIGLAWVISFVLWAPAILF). The Extracellular portion of the chain corresponds to 206 to 228 (WQYFVGKRTVPPGECFIQFLSEP). Residues 229 to 251 (TITFGTAIAAFYMPVTIMTILYW) traverse the membrane as a helical segment. Residues 252 to 490 (RIYKETEKRT…SLIKEKKAAQ (239 aa)) are Cytoplasmic-facing. The short motif at 274–280 (AEAENFV) is the Basolateral sorting signal element. Residues 323-356 (AEQMDQDHSSSDSWNNNDAAASLENSASSDEEDI) form a disordered region. Residues 333–344 (SDSWNNNDAAAS) show a composition bias toward low complexity. At Ser-384 the chain carries Phosphoserine. Residues 491–513 (TLSAILLAFIITWTPYNIMVLVN) form a helical membrane-spanning segment. Topologically, residues 514 to 525 (TFCDSCIPKTYW) are extracellular. Cysteines 516 and 519 form a disulfide. The helical transmembrane segment at 526–545 (NLGYWLCYINSTVNPVCYAL) threads the bilayer. Over 546–589 (CNKTFRTTFKTLLLCQCDKRKRRKQQYQQRQSVIFHKRVPEQAL) the chain is Cytoplasmic.

Belongs to the G-protein coupled receptor 1 family. Muscarinic acetylcholine receptor subfamily. CHRM3 sub-subfamily. In terms of assembly, homodimer; the dimers can form tetramers. Interacts with NALCN. Interacts with TMEM147.

It localises to the cell membrane. It is found in the postsynaptic cell membrane. The protein resides in the basolateral cell membrane. The protein localises to the endoplasmic reticulum membrane. Functionally, the muscarinic acetylcholine receptor mediates various cellular responses, including inhibition of adenylate cyclase, breakdown of phosphoinositides and modulation of potassium channels through the action of G proteins. Primary transducing effect is Pi turnover. This chain is Muscarinic acetylcholine receptor M3 (Chrm3), found in Rattus norvegicus (Rat).